A 378-amino-acid chain; its full sequence is Succinyl-diaminopimelate desuccinylase (378 aa).

His-68 provides a ligand contact to Zn(2+). Residue Asp-70 is part of the active site. Position 101 (Asp-101) interacts with Zn(2+). Glu-135 (proton acceptor) is an active-site residue. Positions 136, 164, and 350 each coordinate Zn(2+).

It belongs to the peptidase M20A family. DapE subfamily. As to quaternary structure, homodimer. Zn(2+) serves as cofactor. The cofactor is Co(2+).

The enzyme catalyses N-succinyl-(2S,6S)-2,6-diaminopimelate + H2O = (2S,6S)-2,6-diaminopimelate + succinate. The protein operates within amino-acid biosynthesis; L-lysine biosynthesis via DAP pathway; LL-2,6-diaminopimelate from (S)-tetrahydrodipicolinate (succinylase route): step 3/3. In terms of biological role, catalyzes the hydrolysis of N-succinyl-L,L-diaminopimelic acid (SDAP), forming succinate and LL-2,6-diaminopimelate (DAP), an intermediate involved in the bacterial biosynthesis of lysine and meso-diaminopimelic acid, an essential component of bacterial cell walls. This Vibrio atlanticus (strain LGP32) (Vibrio splendidus (strain Mel32)) protein is Succinyl-diaminopimelate desuccinylase.